The chain runs to 227 residues: NAD(P)H-hydrate epimerase (227 aa).

The YjeF N-terminal domain occupies 10–227; that stretch reads MRALETAAFN…GKIMVQYIGL (218 aa). A (6S)-NADPHX-binding site is contributed by 62–66; it reads NNGGD. Residues Asn63 and Asp142 each contribute to the K(+) site. Residues 146–152 and Asp176 each bind (6S)-NADPHX; that span reads GIGLNRP. K(+) is bound at residue Ser179.

Belongs to the NnrE/AIBP family. It depends on K(+) as a cofactor.

It catalyses the reaction (6R)-NADHX = (6S)-NADHX. The enzyme catalyses (6R)-NADPHX = (6S)-NADPHX. Catalyzes the epimerization of the S- and R-forms of NAD(P)HX, a damaged form of NAD(P)H that is a result of enzymatic or heat-dependent hydration. This is a prerequisite for the S-specific NAD(P)H-hydrate dehydratase to allow the repair of both epimers of NAD(P)HX. This chain is NAD(P)H-hydrate epimerase, found in Roseobacter litoralis (strain ATCC 49566 / DSM 6996 / JCM 21268 / NBRC 15278 / OCh 149).